A 102-amino-acid polypeptide reads, in one-letter code: Small ribosomal subunit protein uS10 (102 aa).

Belongs to the universal ribosomal protein uS10 family. Part of the 30S ribosomal subunit.

Its function is as follows. Involved in the binding of tRNA to the ribosomes. The chain is Small ribosomal subunit protein uS10 from Saccharolobus islandicus (strain M.16.4 / Kamchatka #3) (Sulfolobus islandicus).